The sequence spans 522 residues: Light-independent protochlorophyllide reductase subunit B (522 aa).

Residue D36 participates in [4Fe-4S] cluster binding. The active-site Proton donor is the D274. 409–410 serves as a coordination point for substrate; the sequence is GL. The interval 426-464 is disordered; the sequence is DEAGPSHHGGKAVPASAPRAEATADEGSTPEEAVPPVAA. Over residues 455–464 the composition is skewed to low complexity; the sequence is PEEAVPPVAA.

This sequence belongs to the ChlB/BchB/BchZ family. As to quaternary structure, protochlorophyllide reductase is composed of three subunits; BchL, BchN and BchB. Forms a heterotetramer of two BchB and two BchN subunits. The cofactor is [4Fe-4S] cluster.

The catalysed reaction is chlorophyllide a + oxidized 2[4Fe-4S]-[ferredoxin] + 2 ADP + 2 phosphate = protochlorophyllide a + reduced 2[4Fe-4S]-[ferredoxin] + 2 ATP + 2 H2O. It functions in the pathway porphyrin-containing compound metabolism; bacteriochlorophyll biosynthesis (light-independent). Functionally, component of the dark-operative protochlorophyllide reductase (DPOR) that uses Mg-ATP and reduced ferredoxin to reduce ring D of protochlorophyllide (Pchlide) to form chlorophyllide a (Chlide). This reaction is light-independent. The NB-protein (BchN-BchB) is the catalytic component of the complex. In Cereibacter sphaeroides (strain ATCC 17025 / ATH 2.4.3) (Rhodobacter sphaeroides), this protein is Light-independent protochlorophyllide reductase subunit B.